The following is a 765-amino-acid chain: Protein transport protein sec23-2 (765 aa).

Positions 56, 60, 79, and 82 each coordinate Zn(2+). Residues serine 565 and serine 566 each carry the phosphoserine modification.

This sequence belongs to the SEC23/SEC24 family. SEC23 subfamily. In terms of assembly, the COPII coat is composed of at least 5 proteins: the sec23/24 complex, the sec13/31 complex, and the protein sar1.

It localises to the cytoplasm. Its subcellular location is the cytoplasmic vesicle. The protein localises to the COPII-coated vesicle membrane. It is found in the endoplasmic reticulum membrane. The protein resides in the golgi apparatus membrane. In terms of biological role, component of the coat protein complex II (COPII) which promotes the formation of transport vesicles from the endoplasmic reticulum (ER). The coat has two main functions, the physical deformation of the endoplasmic reticulum membrane into vesicles and the selection of cargo molecules. The polypeptide is Protein transport protein sec23-2 (sec232) (Schizosaccharomyces pombe (strain 972 / ATCC 24843) (Fission yeast)).